Here is a 384-residue protein sequence, read N- to C-terminus: Putative ankyrin repeat protein L72 (384 aa).

ANK repeat units lie at residues 88-117 (ADMCIIGDIMNFYDINTIRYLIDNGANIKN), 119-146 (GNLLCQASQLGCIDIVKLLVKTSEKEFS), 171-200 (DHNVCILIAIVYKHIDVVKYFISIGEILSV), 202-231 (DDSLYFKLACDTGCLNIIKYLLEIGFDIES), 233-261 (NNYCLMISTINGRNDIVEYIKSRGVNPNN), 298-324 (ILYQLLLIACEYGYYSMTMYLIKAGIK), and 325-357 (PTNSCLKIACKNNKFNIVKLITKYPKTRLDINV).

The chain is Putative ankyrin repeat protein L72 from Acanthamoeba polyphaga (Amoeba).